Reading from the N-terminus, the 379-residue chain is Epoxyqueuosine reductase (379 aa).

Residue Asp-140 is the Proton donor of the active site. The 4Fe-4S ferredoxin-type domain maps to 184 to 214; sequence FEPDTPASDLCGSCNQCVKACPTGSLLGEGK. Residues Cys-194, Cys-197, Cys-200, Cys-204, Cys-220, Cys-246, Cys-249, and Cys-253 each coordinate [4Fe-4S] cluster. The stretch at 307–332 is one HEAT-like PBS-type repeat; the sequence is QRNAIIILARYKDKTAVPDLIDCLQN.

Belongs to the QueG family. As to quaternary structure, monomer. Cob(II)alamin serves as cofactor. It depends on [4Fe-4S] cluster as a cofactor.

It localises to the cytoplasm. The catalysed reaction is epoxyqueuosine(34) in tRNA + AH2 = queuosine(34) in tRNA + A + H2O. Its pathway is tRNA modification; tRNA-queuosine biosynthesis. Its function is as follows. Catalyzes the conversion of epoxyqueuosine (oQ) to queuosine (Q), which is a hypermodified base found in the wobble positions of tRNA(Asp), tRNA(Asn), tRNA(His) and tRNA(Tyr). This is Epoxyqueuosine reductase from Listeria monocytogenes serovar 1/2a (strain ATCC BAA-679 / EGD-e).